The chain runs to 297 residues: Formamidopyrimidine-DNA glycosylase (297 aa).

Pro2 acts as the Schiff-base intermediate with DNA in catalysis. The Proton donor role is filled by Glu3. Lys58 serves as the catalytic Proton donor; for beta-elimination activity. DNA-binding residues include His106, Arg125, and Arg168. Residues Arg259–Pro295 form an FPG-type zinc finger. Catalysis depends on Arg285, which acts as the Proton donor; for delta-elimination activity.

It belongs to the FPG family. In terms of assembly, monomer. It depends on Zn(2+) as a cofactor.

The enzyme catalyses Hydrolysis of DNA containing ring-opened 7-methylguanine residues, releasing 2,6-diamino-4-hydroxy-5-(N-methyl)formamidopyrimidine.. It carries out the reaction 2'-deoxyribonucleotide-(2'-deoxyribose 5'-phosphate)-2'-deoxyribonucleotide-DNA = a 3'-end 2'-deoxyribonucleotide-(2,3-dehydro-2,3-deoxyribose 5'-phosphate)-DNA + a 5'-end 5'-phospho-2'-deoxyribonucleoside-DNA + H(+). In terms of biological role, involved in base excision repair of DNA damaged by oxidation or by mutagenic agents. Acts as a DNA glycosylase that recognizes and removes damaged bases. Has a preference for oxidized purines, such as 7,8-dihydro-8-oxoguanine (8-oxoG). Has AP (apurinic/apyrimidinic) lyase activity and introduces nicks in the DNA strand. Cleaves the DNA backbone by beta-delta elimination to generate a single-strand break at the site of the removed base with both 3'- and 5'-phosphates. This chain is Formamidopyrimidine-DNA glycosylase, found in Methylobacterium sp. (strain 4-46).